Here is a 726-residue protein sequence, read N- to C-terminus: Tripartite terminase subunit 1 (726 aa).

The C3H1-type zinc-finger motif lies at 189-217; that stretch reads CMKCYEELTLTPNQGKSLRRRLHGKFCNH. Position 626–633 (626–633) interacts with ATP; that stretch reads YNDVFGKR.

It belongs to the herpesviridae TRM1 protein family. In terms of assembly, associates with TRM2 and TRM3 to form the tripartite terminase complex. Interacts with portal protein.

The protein localises to the host nucleus. Functionally, component of the molecular motor that translocates viral genomic DNA in empty capsid during DNA packaging. Forms a tripartite terminase complex together with TRM2 and TRM3 in the host cytoplasm. Once the complex reaches the host nucleus, it interacts with the capsid portal vertex. This portal forms a ring in which genomic DNA is translocated into the capsid. TRM1 carries an endonuclease activity that plays an important role for the cleavage of concatemeric viral DNA into unit length genomes. This is Tripartite terminase subunit 1 from Homo sapiens (Human).